The sequence spans 448 residues: Clusterin (448 aa).

An N-terminal signal peptide occupies residues 1–21; sequence MKILLLCVALLLIWDNGMVLG. The Nuclear localization signal signature appears at 77–80; it reads KKKK. Cystine bridges form between Cys-101-Cys-312, Cys-112-Cys-304, Cys-115-Cys-301, Cys-120-Cys-294, and Cys-128-Cys-284. N-linked (GlcNAc...) asparagine glycosylation is present at Asn-102. Ser-132 carries the phosphoserine modification. 5 N-linked (GlcNAc...) asparagine glycosylation sites follow: Asn-144, Asn-290, Asn-327, Asn-353, and Asn-373. A Phosphoserine modification is found at Ser-395. Positions 442-446 match the Nuclear localization signal motif; it reads RRKSR.

The protein belongs to the clusterin family. In terms of assembly, antiparallel disulfide-linked heterodimer of an alpha chain and a beta chain. Self-associates and forms higher oligomers. Interacts with a broad range of misfolded proteins, including APP, APOC2 and LYZ. Slightly acidic pH promotes interaction with misfolded proteins. Forms high-molecular weight oligomers upon interaction with misfolded proteins. Interacts with APOA1, LRP2, CLUAP1 and PON1. Interacts with the complement membrane attack complex. Interacts (via alpha chain) with XRCC6. Interacts with SYVN1, COMMD1, BTRC, CUL1 and with ubiquitin and SCF (SKP1-CUL1-F-box protein) E3 ubiquitin-protein ligase complexes. Interacts (via alpha chain) with BAX in stressed cells, where BAX undergoes a conformation change leading to association with the mitochondrial membrane. Does not interact with BAX in unstressed cells. Found in a complex with LTF, CLU, EPPIN and SEMG1. Interacts (immaturely glycosylated pre-secreted form) with HSPA5; this interaction promotes CLU stability and facilitates stress-induced CLU retrotranslocation from the secretory pathway to the mitochondria, thereby reducing stress-induced apoptosis by stabilizing mitochondrial membrane integrity. Interacts with BCL2L1; this interaction releases and activates BAX and promotes cell death. Interacts with TGFBR2 and ACVR1. Interacts (secreted form) with STMN3; this interaction may act as an important modulator during neuronal differentiation. Interacts with VLDLR and LRP8. In terms of processing, proteolytically cleaved on its way through the secretory system, probably within the Golgi lumen. Proteolytic cleavage is not necessary for its chaperone activity. All non-secreted forms are not proteolytically cleaved. Chaperone activity of uncleaved forms is dependent on a non-reducing environment. Post-translationally, polyubiquitinated, leading to proteasomal degradation. Under cellular stress, the intracellular level of cleaved form is reduced due to proteasomal degradation. Extensively glycosylated with sulfated N-linked carbohydrates. About 30% of the protein mass is comprised of complex N-linked carbohydrate. Endoplasmic reticulum (ER) stress induces changes in glycosylation status and increases level of hypoglycosylated forms. Core carbohydrates are essential for chaperone activity. Non-secreted forms are hypoglycosylated or unglycosylated. In terms of tissue distribution, most abundant in stomach, liver, brain, and testis, with intermediate levels in heart, ovary and kidney.

The protein localises to the secreted. Its subcellular location is the nucleus. It localises to the cytoplasm. It is found in the mitochondrion membrane. The protein resides in the cytosol. The protein localises to the microsome. Its subcellular location is the endoplasmic reticulum. It localises to the mitochondrion. It is found in the perinuclear region. The protein resides in the cytoplasmic vesicle. The protein localises to the secretory vesicle. Its subcellular location is the chromaffin granule. In terms of biological role, functions as extracellular chaperone that prevents aggregation of non native proteins. Prevents stress-induced aggregation of blood plasma proteins. Inhibits formation of amyloid fibrils by APP, APOC2, B2M, CALCA, CSN3, SNCA and aggregation-prone LYZ variants (in vitro). Does not require ATP. Maintains partially unfolded proteins in a state appropriate for subsequent refolding by other chaperones, such as HSPA8/HSC70. Does not refold proteins by itself. Binding to cell surface receptors triggers internalization of the chaperone-client complex and subsequent lysosomal or proteasomal degradation. When secreted, protects cells against apoptosis and against cytolysis by complement: inhibits assembly of the complement membrane attack complex (MAC) by preventing polymerization of C9 pore component of the MAC complex. Intracellular forms interact with ubiquitin and SCF (SKP1-CUL1-F-box protein) E3 ubiquitin-protein ligase complexes and promote the ubiquitination and subsequent proteasomal degradation of target proteins. Promotes proteasomal degradation of COMMD1 and IKBKB. Modulates NF-kappa-B transcriptional activity. Following stress, promotes apoptosis. Inhibits apoptosis when associated with the mitochondrial membrane by interference with BAX-dependent release of cytochrome c into the cytoplasm. Plays a role in the regulation of cell proliferation. Following ER stress, suppresses stress-induced apoptosis by stabilizing mitochondrial membrane integrity through interaction with HSPA5. When secreted, does not affect caspase or BAX-mediated intrinsic apoptosis and TNF-induced NF-kappa-B-activity. When secreted, acts as an important modulator during neuronal differentiation through interaction with STMN3. Plays a role in the clearance of immune complexes that arise during cell injury. The protein is Clusterin of Mus musculus (Mouse).